Consider the following 186-residue polypeptide: Ribosome-recycling factor (186 aa).

This sequence belongs to the RRF family.

It localises to the cytoplasm. Responsible for the release of ribosomes from messenger RNA at the termination of protein biosynthesis. May increase the efficiency of translation by recycling ribosomes from one round of translation to another. The polypeptide is Ribosome-recycling factor (Porphyromonas gingivalis (strain ATCC BAA-308 / W83)).